Reading from the N-terminus, the 612-residue chain is Protein lin-61 (612 aa).

MBT repeat units follow at residues 143 to 249, 263 to 380, 381 to 501, and 508 to 607; these read YLWE…MDKI, NDMV…GYQL, NAKK…LVPP, and FRWD…LQPP.

In terms of assembly, interacts preferentially with histone H3 that is dimethylated or trimethylated at 'Lys-9'.

The protein resides in the nucleus. Its subcellular location is the chromosome. Synthetic multivulva class B (synMuvB) protein required to repress the induction of vulval development by Ras signaling. Unlike other synMuv proteins it does not associate with the multiprotein DRM complex and the NuRD-like complex. Interaction with methylated histone H3 is essential for vulva development. It has a role in maintaining genome stability. This Caenorhabditis elegans protein is Protein lin-61 (lin-61).